The primary structure comprises 174 residues: 2-hydroxy-palmitic acid dioxygenase MPO1 (174 aa).

At 1 to 23 the chain is on the cytoplasmic side; the sequence is MGEGLLDLRSQLGFYKFYHHNPK. Residues 24–44 traverse the membrane as a helical segment; sequence NVLIHSIFVPTILFSGSCMLH. Residues 45–63 lie on the Lumenal side of the membrane; sequence RVKIYQSISLTAVLSVLFS. Residues 64–84 traverse the membrane as a helical segment; that stretch reads IFYCLLYLPTGLLAGVLLLLL. Topologically, residues 85–98 are cytoplasmic; the sequence is NLALIDHRVDLTFK. A helical transmembrane segment spans residues 99-119; the sequence is QELGLFTIGWIFQFVGHGVFE. Topologically, residues 120–131 are lumenal; sequence KRRPALIDNLVQ. A helical membrane pass occupies residues 132-152; sequence SLVLAPYFIMFEFLFKLGFMP. Over 153–174 the chain is Cytoplasmic; sequence RLKATLEHDLEIKQRNLRMQRQ.

Belongs to the MPO1 family. Fe(2+) serves as cofactor.

The protein localises to the endoplasmic reticulum membrane. It carries out the reaction (R)-2-hydroxyhexadecanoate + O2 = pentadecanoate + CO2 + H2O. In terms of biological role, dioxygenase that catalyzes the alpha-oxidation of 2-hydroxy fatty acids in an iron-dependent manner. Involved in metabolism of phytosphingosine and is required for proper endoplasmic reticulum stress response. The sequence is that of 2-hydroxy-palmitic acid dioxygenase MPO1 from Saccharomyces cerevisiae (strain ATCC 204508 / S288c) (Baker's yeast).